Reading from the N-terminus, the 301-residue chain is Cuticle collagen 1 (301 aa).

Positions 1-37 are cleaved as a signal peptide; sequence METDGRLKAYKFVAYAAVGFSIAAVASVLLTLPMVYS. The furin-like endopeptidase recognition region stretch occupies residues 79–82; it reads RTTR. Triple-helical region stretches follow at residues 105–134, 153–179, 183–209, and 218–283; these read GPPG…PGKP, GPPG…PGTD, GSPG…PGTP, and GAPG…KGIC. The interval 109–284 is disordered; sequence PAGAPGKPGK…GTPGEKGICP (176 aa). Pro residues-rich tracts occupy residues 131–164 and 184–193; these read PGKP…PGAP and SPGPRGPPGP. Over residues 194 to 210 the composition is skewed to low complexity; sequence AGEAGAPGPAGEPGTPA. Over residues 226 to 258 the composition is skewed to pro residues; it reads SGPPGPPGPPGAPGNDGPPGPPGPKGAPGPDGP.

Belongs to the cuticular collagen family. Collagen polypeptide chains are complexed within the cuticle by disulfide bonds and other types of covalent cross-links.

The protein resides in the secreted. It localises to the extracellular space. In terms of biological role, secreted collagen that forms part of the nematode cuticle, which functions as an exoskeleton and a barrier to protect the worm from its environment. Secretion and subsequent incorporation into the cuticle is likely mediated by bli-4, which probably cleaves at the N-terminal consensus furin cleavage site. The chain is Cuticle collagen 1 (sqt-3) from Caenorhabditis elegans.